Consider the following 217-residue polypeptide: Vacuolar protein-sorting-associated protein 37 homolog 1 (217 aa).

A disordered region spans residues 1–49 (MFNFWGSKDQQQGQSRPQEASSQSPWYSPSLVSSPSSSRPQSSGQISAQ). Positions 8–20 (KDQQQGQSRPQEA) are enriched in polar residues. The segment covering 21-47 (SSQSPWYSPSLVSSPSSSRPQSSGQIS) has biased composition (low complexity). The region spanning 137–217 (QEKLNELERQ…IHLAAKTSNI (81 aa)) is the VPS37 C-terminal domain.

The protein belongs to the VPS37 family. As to quaternary structure, component of the endosomal sorting required for transport complex I (ESCRT-I), composed of ELC, VPS28 and VPS37. Interacts with ELC.

Its subcellular location is the endosome. Component of the ESCRT-I complex (endosomal sorting complex required for transport I), a regulator of vesicular trafficking process. Required for the sorting of endocytic ubiquitinated cargos into multivesicular bodies (MVBs). This chain is Vacuolar protein-sorting-associated protein 37 homolog 1 (VPS37-1), found in Arabidopsis thaliana (Mouse-ear cress).